Here is a 310-residue protein sequence, read N- to C-terminus: Methionyl-tRNA formyltransferase (310 aa).

111 to 114 lines the (6S)-5,6,7,8-tetrahydrofolate pocket; sequence SLLP.

It belongs to the Fmt family.

The catalysed reaction is L-methionyl-tRNA(fMet) + (6R)-10-formyltetrahydrofolate = N-formyl-L-methionyl-tRNA(fMet) + (6S)-5,6,7,8-tetrahydrofolate + H(+). Attaches a formyl group to the free amino group of methionyl-tRNA(fMet). The formyl group appears to play a dual role in the initiator identity of N-formylmethionyl-tRNA by promoting its recognition by IF2 and preventing the misappropriation of this tRNA by the elongation apparatus. The sequence is that of Methionyl-tRNA formyltransferase from Afipia carboxidovorans (strain ATCC 49405 / DSM 1227 / KCTC 32145 / OM5) (Oligotropha carboxidovorans).